The chain runs to 680 residues: Serine/threonine-protein kinase YPK1 (680 aa).

Residues 1–11 (MYSWKSKFKFG) are compositionally biased toward basic residues. The interval 1–117 (MYSWKSKFKF…GTPNDATSSS (117 aa)) is disordered. Composition is skewed to basic and acidic residues over residues 12-21 (KSKEEKEAKH) and 41-56 (GEHDASITRSSLDRKG). Threonine 57 is modified (phosphothreonine). Over residues 59–71 (NPSNSSVVPVRVS) the composition is skewed to low complexity. Residues serine 61, serine 64, and serine 71 each carry the phosphoserine modification. Polar residues predominate over residues 73–83 (DASSSTSTVRD). Positions 84 to 97 (SNGGNSENTNSSQN) are enriched in low complexity. Over residues 98–117 (LDETANIGSTGTPNDATSSS) the composition is skewed to polar residues. The residue at position 170 (serine 170) is a Phosphoserine. The 256-residue stretch at 347–602 (FDLLKVIGKG…ADEIRNHPFF (256 aa)) folds into the Protein kinase domain. Residues 353–361 (IGKGSFGKV) and lysine 376 contribute to the ATP site. The active-site Proton acceptor is the aspartate 470. A Phosphothreonine modification is found at threonine 502. Threonine 504 is modified (phosphothreonine; by PKH1). Positions 603 to 673 (SQLSWKRLLM…VGNEQLGSSM (71 aa)) constitute an AGC-kinase C-terminal domain. 2 positions are modified to phosphoserine: serine 644 and serine 653. Threonine 662 is modified (phosphothreonine; by PKH1). At serine 671 the chain carries Phosphoserine.

This sequence belongs to the protein kinase superfamily. AGC Ser/Thr protein kinase family. RAC subfamily. Post-translationally, autophosphorylated. Phytosphingosine level stimulates phosphorylation by PKH1. The N-terminal half is phosphorylated by FPK1. Phosphorylation is inhibited by exogenous addition of phytosphingosine.

Its subcellular location is the cytoplasm. The protein resides in the cell membrane. It catalyses the reaction L-seryl-[protein] + ATP = O-phospho-L-seryl-[protein] + ADP + H(+). The catalysed reaction is L-threonyl-[protein] + ATP = O-phospho-L-threonyl-[protein] + ADP + H(+). With respect to regulation, activated by phytosphingosine (PHS), a sphingoid long chain base. Activated by PKH1 phosphorylation. Functionally, plays an essential role in the proliferation of yeast cells. Involved in a signaling pathway, required for optimal cell wall integrity, that acts in parallel with the PKC1-SLT2-dependent pathway. Downstream kinase in the sphingolipid-mediated signaling pathway. Phosphorylation is regulated by the intracellular sphingolipid concentration. Disruption or inhibition of sphingolipid synthesis leads to the activation and phosphorylation of YPK1 through the TORC2 and PKH1 pathways, which in turn phosphorylates ORM1 and LAG1 to activate sphingolipid synthesis. Cooperates with SLI1 in mediating resistance to the sphingolipid biosynthesis inhibitor drug myriocin (ISP-1); kinase activity is essential for the resistance. Required for both receptor-mediated and fluid-phase endocytosis, but is not necessary for receptor phosphorylation or ubiquitination. Necessary for the internalization of plasma membrane proteins carrying different types of internalization signals. Acts downstream of the PKH kinases to control endocytosis by phosphorylating components of the endocytic machinery. Phosphorylation of residue Thr-504 in the activation loop and residue Thr-662 are essential for activity. Phosphorylates and down-regulates flippase activator FPK1. This chain is Serine/threonine-protein kinase YPK1 (YPK1), found in Saccharomyces cerevisiae (strain ATCC 204508 / S288c) (Baker's yeast).